Consider the following 191-residue polypeptide: Rubrerythrin (191 aa).

Positions 1-146 (MKSLKGSRTE…DFARNIKEGR (146 aa)) constitute a Ferritin-like diiron domain. The Fe(3+) site is built by Glu20, Glu53, Glu94, Glu97, Glu128, His131, Cys158, Cys161, Cys174, and Cys177. The 39-residue stretch at 153–191 (ATKWRCRNCGYVHEGTGAPELCPACAHPKAHFELLGINW) folds into the Rubredoxin-like domain.

As to quaternary structure, homodimer. Possesses two rubredoxin-like centers and two non-sulfur oxo-bridged di-iron centers per dimer. Fe(3+) serves as cofactor.

It localises to the cytoplasm. In terms of biological role, may provide oxidative stress protection via catalytic reduction of intracellular hydrogen peroxide. In Nitratidesulfovibrio vulgaris (strain ATCC 29579 / DSM 644 / CCUG 34227 / NCIMB 8303 / VKM B-1760 / Hildenborough) (Desulfovibrio vulgaris), this protein is Rubrerythrin (rbr).